The sequence spans 208 residues: Protein GrpE (208 aa).

Residues 1–62 (MTEKDESVKS…ETAVDPKDEE (62 aa)) are disordered. Residues 46–55 (SNEESSEETA) are compositionally biased toward acidic residues.

The protein belongs to the GrpE family. Homodimer.

Its subcellular location is the cytoplasm. Functionally, participates actively in the response to hyperosmotic and heat shock by preventing the aggregation of stress-denatured proteins, in association with DnaK and GrpE. It is the nucleotide exchange factor for DnaK and may function as a thermosensor. Unfolded proteins bind initially to DnaJ; upon interaction with the DnaJ-bound protein, DnaK hydrolyzes its bound ATP, resulting in the formation of a stable complex. GrpE releases ADP from DnaK; ATP binding to DnaK triggers the release of the substrate protein, thus completing the reaction cycle. Several rounds of ATP-dependent interactions between DnaJ, DnaK and GrpE are required for fully efficient folding. This is Protein GrpE from Staphylococcus haemolyticus (strain JCSC1435).